A 445-amino-acid chain; its full sequence is Meiosis-specific serine/threonine-protein kinase mek1 (445 aa).

An FHA domain is found at 62–116; that stretch reads VSVGRSNTCNYQLLQFTASYKHFRVYSVLIDDDMDPLVYCEDQSSNGTFLNHRLI. Positions 160 to 421 constitute a Protein kinase domain; the sequence is NITQRLLGIG…VKQCLSHPWF (262 aa). Residues 166–174 and Lys189 each bind ATP; that span reads LGIGGFSRI. Asp281 functions as the Proton acceptor in the catalytic mechanism.

Belongs to the protein kinase superfamily. CAMK Ser/Thr protein kinase family. CHEK2 subfamily.

The enzyme catalyses L-seryl-[protein] + ATP = O-phospho-L-seryl-[protein] + ADP + H(+). It carries out the reaction L-threonyl-[protein] + ATP = O-phospho-L-threonyl-[protein] + ADP + H(+). In terms of biological role, probable protein kinase required for meiotic recombination. This chain is Meiosis-specific serine/threonine-protein kinase mek1 (mek1), found in Schizosaccharomyces pombe (strain 972 / ATCC 24843) (Fission yeast).